Consider the following 166-residue polypeptide: Small ribosomal subunit protein uS5 (166 aa).

The S5 DRBM domain occupies 11–74 (LQEKLIAVNR…EKARRNMINV (64 aa)).

Belongs to the universal ribosomal protein uS5 family. Part of the 30S ribosomal subunit. Contacts proteins S4 and S8.

Functionally, with S4 and S12 plays an important role in translational accuracy. In terms of biological role, located at the back of the 30S subunit body where it stabilizes the conformation of the head with respect to the body. This chain is Small ribosomal subunit protein uS5, found in Enterobacter sp. (strain 638).